The following is a 285-amino-acid chain: Pantothenate synthetase (285 aa).

30–37 contributes to the ATP binding site; sequence MGFLHEGH. His37 acts as the Proton donor in catalysis. Gln61 lines the (R)-pantoate pocket. Residue Gln61 participates in beta-alanine binding. 147-150 contacts ATP; that stretch reads GQKD. A (R)-pantoate-binding site is contributed by Gln153. Residues Val176 and 184 to 187 each bind ATP; that span reads KSSR.

The protein belongs to the pantothenate synthetase family. As to quaternary structure, homodimer.

The protein localises to the cytoplasm. The enzyme catalyses (R)-pantoate + beta-alanine + ATP = (R)-pantothenate + AMP + diphosphate + H(+). It functions in the pathway cofactor biosynthesis; (R)-pantothenate biosynthesis; (R)-pantothenate from (R)-pantoate and beta-alanine: step 1/1. Catalyzes the condensation of pantoate with beta-alanine in an ATP-dependent reaction via a pantoyl-adenylate intermediate. The protein is Pantothenate synthetase of Listeria innocua serovar 6a (strain ATCC BAA-680 / CLIP 11262).